Consider the following 194-residue polypeptide: Endo-1,4-beta-xylanase (194 aa).

Residue Gly-1 is modified to N-acetylglycine. Residues 1 to 191 (GTTPNSEGWH…SSGYARITVA (191 aa)) enclose the GH11 domain. Catalysis depends on Glu-86, which acts as the Nucleophile. The cysteines at positions 110 and 154 are disulfide-linked. Glu-178 functions as the Proton donor in the catalytic mechanism.

Belongs to the glycosyl hydrolase 11 (cellulase G) family.

The catalysed reaction is Endohydrolysis of (1-&gt;4)-beta-D-xylosidic linkages in xylans.. It functions in the pathway glycan degradation; xylan degradation. The chain is Endo-1,4-beta-xylanase from Byssochlamys spectabilis (Paecilomyces variotii).